Reading from the N-terminus, the 334-residue chain is MKDNNSGKNSLFREENEEEVLVDPYGRKVTGLRISITDRCNLSCMYCHNEGAECCTCGPVGNEMSPELICSIIREAAKFGVRKVKFSGGEPLFRKDFEDILACLPPLKEVSATTNGILLEKRAKTLKAAGLDRINVSLDSLDPEKYRKITGAPPGTLEKVIRGINSAVEAGLTPVKLNMVLLKGINENEIDEMMDFIRPYKGKVILQLIELMNIDPELSKYTIDSKTLEKSLEERASEVRVRHLHHRKKYMIDGVEVEFVRPMDNSEFCAHCSRLRVTADGKLRPCLLVHDNLVDIGGANSPEEIEKLLRLAVSRRKPYYTPIMKIEKLKKKKE.

One can recognise a Radical SAM core domain in the interval 24–256; the sequence is PYGRKVTGLR…RKKYMIDGVE (233 aa). Arginine 33 contributes to the GTP binding site. [4Fe-4S] cluster is bound by residues cysteine 40 and cysteine 44. Tyrosine 46 provides a ligand contact to S-adenosyl-L-methionine. A [4Fe-4S] cluster-binding site is contributed by cysteine 47. Lysine 85 is a GTP binding site. Glycine 89 is an S-adenosyl-L-methionine binding site. Threonine 113 contributes to the GTP binding site. Serine 137 contributes to the S-adenosyl-L-methionine binding site. Lysine 176 contributes to the GTP binding site. [4Fe-4S] cluster contacts are provided by cysteine 269 and cysteine 272. 274 to 276 serves as a coordination point for GTP; that stretch reads RLR. Residue cysteine 286 coordinates [4Fe-4S] cluster.

The protein belongs to the radical SAM superfamily. MoaA family. [4Fe-4S] cluster is required as a cofactor.

The enzyme catalyses GTP + AH2 + S-adenosyl-L-methionine = (8S)-3',8-cyclo-7,8-dihydroguanosine 5'-triphosphate + 5'-deoxyadenosine + L-methionine + A + H(+). Its pathway is cofactor biosynthesis; molybdopterin biosynthesis. Its function is as follows. Catalyzes the cyclization of GTP to (8S)-3',8-cyclo-7,8-dihydroguanosine 5'-triphosphate. In Methanosarcina mazei (strain ATCC BAA-159 / DSM 3647 / Goe1 / Go1 / JCM 11833 / OCM 88) (Methanosarcina frisia), this protein is Probable GTP 3',8-cyclase.